The chain runs to 207 residues: Succinyl-CoA:3-ketoacid coenzyme A transferase subunit B (207 aa).

The active site involves glutamate 43.

It belongs to the 3-oxoacid CoA-transferase subunit B family. As to quaternary structure, heterodimer of a subunit A and a subunit B.

The catalysed reaction is a 3-oxo acid + succinyl-CoA = a 3-oxoacyl-CoA + succinate. This is Succinyl-CoA:3-ketoacid coenzyme A transferase subunit B (scoB) from Helicobacter pylori (strain J99 / ATCC 700824) (Campylobacter pylori J99).